Consider the following 497-residue polypeptide: Putative BTB/POZ domain-containing protein R738 (497 aa).

Residues 16–86 form the BTB domain; that stretch reads SDCKLVLDDG…FYEKSNVINA (71 aa).

Belongs to the mimivirus BTB/WD family.

The protein is Putative BTB/POZ domain-containing protein R738 of Acanthamoeba polyphaga (Amoeba).